The sequence spans 524 residues: Xanthotoxin 5-hydroxylase CYP82C4 (524 aa).

A helical membrane pass occupies residues 1–21; that stretch reads MDTSLFSLFVPILVFVFIALF. Residue cysteine 463 coordinates heme.

Belongs to the cytochrome P450 family. Heme serves as cofactor. Expressed in both primary and lateral roots under iron-deficient conditions, except in apical root zones, and mostly in the root epidermal layer.

The protein localises to the membrane. The catalysed reaction is fraxetin + reduced [NADPH--hemoprotein reductase] + O2 = sideretin (reduced form) + oxidized [NADPH--hemoprotein reductase] + H2O + H(+). The enzyme catalyses xanthotoxin + reduced [NADPH--hemoprotein reductase] + O2 = 5-hydroxyxanthotoxin + oxidized [NADPH--hemoprotein reductase] + H2O + 2 H(+). The protein operates within phenylpropanoid metabolism. In terms of biological role, can hydroxylate xanthotoxin (8-methoxypsoralen) to form 5-hydroxyxanthotoxin (5-hydroxy-8-methoxypsoralen) in vivo and in vitro. Involved in the early iron deficiency response, possibly through an IDE1-like mediated pathway. Involved in the pathway of sideretin biosynthesis from feruloyl CoA, a redox-active catecholic metabolite exuded by roots in response to iron deficiency in order to facilitate the uptake of iron; this pathway consists in the successive conversion from feruloyl CoA to scopoletin, from scopoletin to fraxetin and from fraxetin to sideretin. Catalyzes the biosynthesis of sideretin via fraxetin hydroxylation. The protein is Xanthotoxin 5-hydroxylase CYP82C4 of Arabidopsis thaliana (Mouse-ear cress).